The primary structure comprises 426 residues: 5-aminovalerate aminotransferase DavT (426 aa).

Pyridoxal 5'-phosphate-binding positions include 112 to 113, Tyr139, and 240 to 243; these read GS and DEVQ. At Lys269 the chain carries N6-(pyridoxal phosphate)lysine. Pyridoxal 5'-phosphate is bound at residue Thr298.

It belongs to the class-III pyridoxal-phosphate-dependent aminotransferase family. The cofactor is pyridoxal 5'-phosphate.

The catalysed reaction is 5-aminopentanoate + 2-oxoglutarate = 5-oxopentanoate + L-glutamate. Functionally, catalyzes the conversion of 5-aminovalerate to 5-oxopentanoate. The sequence is that of 5-aminovalerate aminotransferase DavT (davT) from Pseudomonas aeruginosa (strain ATCC 15692 / DSM 22644 / CIP 104116 / JCM 14847 / LMG 12228 / 1C / PRS 101 / PAO1).